The chain runs to 444 residues: Sensor protein CiaH (444 aa).

A run of 2 helical transmembrane segments spans residues 21–41 and 183–203; these read FGVFTLIFSTMTLIILQVMHS and LIVVVMASFWILSLLASLYLA. The 216-residue stretch at 223-438 folds into the Histidine kinase domain; it reads NASHELRTPL…IFEVKIAIQT (216 aa). His226 is subject to Phosphohistidine; by autocatalysis.

It localises to the cell membrane. The catalysed reaction is ATP + protein L-histidine = ADP + protein N-phospho-L-histidine.. Its function is as follows. Member of the two-component regulatory system CiaH/CiaR. Involved in early steps of competence regulation and in penicillin susceptibility. Probably phosphorylates CiaR. The chain is Sensor protein CiaH (ciaH) from Streptococcus pneumoniae serotype 4 (strain ATCC BAA-334 / TIGR4).